The chain runs to 864 residues: Coiled-coil and C2 domain-containing protein 1B (864 aa).

The disordered stretch occupies residues 82–154 (QDCMTDMTGE…VNSSVAEIQH (73 aa)). 2 stretches are compositionally biased toward acidic residues: residues 89-104 (TGED…EELL) and 111-129 (VGEE…EESE). Residues 91–118 (EDDDDDLEEDEELLAELQDVVGEEEEVE) adopt a coiled-coil conformation. Residues 142–154 (EQQVNSSVAEIQH) show a composition bias toward polar residues. Residues 162 to 209 (GMLQVLEERIGNYKEAISNAKLSNESAKARRYERGLKTLESMLSAARQ) are a coiled coil. The tract at residues 218 to 249 (IPPPVACGKPAVSPTTDVPTTDTSKQGLGDLN) is disordered. The span at 229–241 (VSPTTDVPTTDTS) shows a compositional bias: low complexity. Residues 385–412 (VGSLLQALQQRMEKYKSAAQQAKSSGDD) are a coiled coil. 2 disordered regions span residues 441 to 463 (AELP…EEGS) and 478 to 502 (AGED…PTQL). Over residues 444–453 (PVPPGFPPLP) the composition is skewed to pro residues. Coiled-coil stretches lie at residues 464-488 (VEKA…DEDE) and 535-564 (PAVQ…KNDL). The C2 domain occupies 685 to 820 (HFEDKTLKIV…ETQCEIREIV (136 aa)).

The protein belongs to the CC2D1 family.

The protein is Coiled-coil and C2 domain-containing protein 1B (cc2d1b) of Xenopus laevis (African clawed frog).